The following is a 1198-amino-acid chain: Fibronectin type-III domain-containing protein 3A (1198 aa).

Positions 160 to 221 are disordered; sequence YGDVDAHSTH…PSPINEHNGL (62 aa). A compositionally biased stretch (basic and acidic residues) spans 163–201; that stretch reads VDAHSTHGRSNFRDERSSKTYERLQKKLKDRQGTQKDKM. A compositionally biased stretch (low complexity) spans 202-214; the sequence is SSPPSSPQKCPSP. Phosphoserine is present on residues Ser-203, Ser-207, and Ser-213. 9 Fibronectin type-III domains span residues 268–369, 373–465, 469–562, 566–660, 664–757, 761–851, 861–950, 951–1045, and 1046–1151; these read NIVK…TLSC, IPNP…TSGC, MPAS…TCPD, IPVK…TPAV, PCLP…TAPG, QCKP…TPPS, EISD…TKPL, PPDP…TPKS, and VPAA…TEPP. Lys-384 bears the N6-acetyllysine mark. Residues 1177–1197 form a helical membrane-spanning segment; it reads ILVLFAFFSILIAFIIQYFVI.

The protein belongs to the FNDC3 family. As to expression, expressed in the odontoblast and nerves in the dental pulp. Also expressed in trachea and to a lesser extent in the brain, liver, lung and kidney.

It localises to the golgi apparatus membrane. In terms of biological role, mediates spermatid-Sertoli adhesion during spermatogenesis. This Homo sapiens (Human) protein is Fibronectin type-III domain-containing protein 3A (FNDC3A).